The primary structure comprises 347 residues: MPLLSCSQTFRLPPLHETFSVFPDNGLNPNYNACRAQSRAWISKYNVQVCGPKMRAFMDNCNFELSNAYVYPYAQPAGLRATMDLANILWLYDEYTDMQTGEDAAKAAVTVSKTLLNPEYDDDTWICHMMRDFYVNHIQKCRPNVAHRFIENFCRYTEVVGTEAKLREKNEVLDIPGYVALRREISAVRTCFDLVEYCLDLDFPDYVHKDPIFVIGYNAAMDLVFWANDLFSYNSEQAKGHAAANVVTVIMTSKKMNLQSTVDFIAGFCEALTFQLLDAKRALSLHEDPTFSRDAVRCLEAFGDWVRGNDAWSFATTRYFGPENKIVKETRIVKLKAPVEESVALKE.

Mg(2+) contacts are provided by aspartate 93, asparagine 228, serine 232, and glutamate 236. The short motif at 93-97 (DEYTD) is the DDXXD motif element. 2 residues coordinate (2E,6E)-farnesyl diphosphate: arginine 318 and tyrosine 319.

It belongs to the terpene synthase family. The cofactor is Mg(2+).

It carries out the reaction (2E,6E)-farnesyl diphosphate = viridiflorene + diphosphate. Functionally, terpene cyclase that catalyzes the cyclization of farnesyl diphosphate (FPP) to viridiflorene and viridiflorol. The sequence is that of Sesquiterpene synthase M422DRAFT_47084 from Sphaerobolus stellatus (strain SS14).